We begin with the raw amino-acid sequence, 530 residues long: Ataxin-10 homolog (530 aa).

It belongs to the ataxin-10 family.

Its subcellular location is the cytoplasm. Its function is as follows. May play a role in the regulation of cytokinesis. The sequence is that of Ataxin-10 homolog (CTR86) from Candida glabrata (strain ATCC 2001 / BCRC 20586 / JCM 3761 / NBRC 0622 / NRRL Y-65 / CBS 138) (Yeast).